A 522-amino-acid chain; its full sequence is F-box only protein 7 (522 aa).

Disordered stretches follow at residues 1–20 and 85–128; these read MKLRVRLQKRTQPLEVPESE and PNLP…HGQV. The interval 1 to 88 is ubiquitin-like; the sequence is MKLRVRLQKR…EDEMPAPNLP (88 aa). The span at 87–114 shows a compositional bias: polar residues; it reads LPSSTDSEHSSLQNNDQPPLAATSSQAN. Residues 92–129 are important for interaction with PINK1; the sequence is DSEHSSLQNNDQPPLAATSSQANIPDEQGSDSSHGQVT. The important for interaction with CDK6 stretch occupies residues 129-169; sequence TQYDAWTDDSMEGPSHSAEAVSIQDAMSVEEASGFHPLEPM. The tract at residues 180 to 324 is important for dimerization and interaction with PSMF1; sequence PHSLEALYQS…PLLAFTRQVL (145 aa). Residues 329–375 form the F-box domain; the sequence is VFGLVVLPLELKLRIFRLLDVHSVLALSAVCHDLLIASNDPLLWRCL. Residues 381-522 form an important for interaction with CDK6 region; sequence RDSTIRGPDT…RSADNRLPYL (142 aa). Omega-N-methylarginine occurs at positions 431 and 451. The interval 459–522 is disordered; the sequence is DPVTSLIPRP…RSADNRLPYL (64 aa). The RFDP motif motif lies at 481–484; the sequence is RFDP. Arg518 carries the post-translational modification Asymmetric dimethylarginine.

In terms of assembly, part of the SCF (SKP1-CUL1-F-box) E3 ubiquitin-protein ligase complex SCF(FBXO7) formed of CUL1, SKP1, RBX1 and FBXO7. Interacts via its C-terminal proline-rich region with DLGAP5. Interacts with BIRC2. Interacts with CDK6 and promotes its interaction with D-type cyclin. Interacts (via the N-terminal Ubl domain) with PRKN. Interacts (via N-terminal region) with PINK1. Interacts with PSMF1.

It is found in the cytoplasm. The protein localises to the nucleus. The protein resides in the mitochondrion. It localises to the cytosol. Its pathway is protein modification; protein ubiquitination. Substrate recognition component of a SCF (SKP1-CUL1-F-box protein) E3 ubiquitin-protein ligase complex which mediates the ubiquitination and subsequent proteasomal degradation of target proteins and plays a role in several biological processes such as cell cycle, cell proliferation, or maintenance of chromosome stability. Recognizes and ubiquitinates BIRC2 and the cell cycle regulator DLGAP5. Plays a role downstream of PINK1 in the clearance of damaged mitochondria via selective autophagy (mitophagy) by targeting PRKN to dysfunctional depolarized mitochondria. Promotes MFN1 ubiquitination. Mediates the ubiquitination and proteasomal degradation of UXT isoform 2, thereby impairing the NF-kappa-B signaling pathway. Inhibits NF-kappa-B pathway also by promoting the ubiquitinatioin of TRAF2. Affects the assembly state and activity of the proteasome in the cells including neurons by ubiquitinating the proteasomal subunit PSMA2 via 'Lys-63'-linked polyubiquitin chains. Promotes 'Lys-48'-linked polyubiquitination SIRT7, leading to the hydrogen peroxide-induced cell death. The protein is F-box only protein 7 (Fbxo7) of Rattus norvegicus (Rat).